A 178-amino-acid chain; its full sequence is Dual-action ribosomal maturation protein DarP (178 aa).

The protein belongs to the DarP family.

It localises to the cytoplasm. Its function is as follows. Member of a network of 50S ribosomal subunit biogenesis factors which assembles along the 30S-50S interface, preventing incorrect 23S rRNA structures from forming. Promotes peptidyl transferase center (PTC) maturation. The protein is Dual-action ribosomal maturation protein DarP of Mannheimia succiniciproducens (strain KCTC 0769BP / MBEL55E).